The chain runs to 80 residues: Putative membrane protein insertion efficiency factor (80 aa).

Residues 61-80 (KTGKDPVPDHFSLKRNQEGE) are disordered. The segment covering 62–80 (TGKDPVPDHFSLKRNQEGE) has biased composition (basic and acidic residues).

Belongs to the UPF0161 family.

The protein localises to the cell membrane. In terms of biological role, could be involved in insertion of integral membrane proteins into the membrane. The chain is Putative membrane protein insertion efficiency factor from Streptococcus pneumoniae serotype 19F (strain G54).